The chain runs to 226 residues: MNENLFAPFITPTILGITTLPIIITFPCLILSSPKRWLPNRIQILQMWLIRLITKQMMTMHNKQGRTWTLMLMSLILFIASTNLLGLLPYSFTPTTQLSMNIGMAIPLWAGTVIMGFRNKPKMSLAHFLPQGTPTPLIPMLIIIETISLFIQPLALAVRLTANITAGHLLIHLIGSATLALSSISMTVSTITFSILFLLTLLEIAVAMIQAYVFTLLVSLYLHDNS.

The next 6 membrane-spanning stretches (helical) occupy residues 6–26 (FAPFITPTILGITTLPIIITF), 68–88 (WTLMLMSLILFIASTNLLGLL), 97–117 (QLSMNIGMAIPLWAGTVIMGF), 138–158 (IPMLIIIETISLFIQPLALAV), 164–184 (ITAGHLLIHLIGSATLALSSI), and 195–215 (ILFLLTLLEIAVAMIQAYVFT).

Belongs to the ATPase A chain family. As to quaternary structure, component of the ATP synthase complex composed at least of ATP5F1A/subunit alpha, ATP5F1B/subunit beta, ATP5MC1/subunit c (homooctomer), MT-ATP6/subunit a, MT-ATP8/subunit 8, ATP5ME/subunit e, ATP5MF/subunit f, ATP5MG/subunit g, ATP5MK/subunit k, ATP5MJ/subunit j, ATP5F1C/subunit gamma, ATP5F1D/subunit delta, ATP5F1E/subunit epsilon, ATP5PF/subunit F6, ATP5PB/subunit b, ATP5PD/subunit d, ATP5PO/subunit OSCP. ATP synthase complex consists of a soluble F(1) head domain (subunits alpha(3) and beta(3)) - the catalytic core - and a membrane F(0) domain - the membrane proton channel (subunits c, a, 8, e, f, g, k and j). These two domains are linked by a central stalk (subunits gamma, delta, and epsilon) rotating inside the F1 region and a stationary peripheral stalk (subunits F6, b, d, and OSCP). Interacts with DNAJC30; interaction is direct.

The protein resides in the mitochondrion inner membrane. The enzyme catalyses H(+)(in) = H(+)(out). Its function is as follows. Subunit a, of the mitochondrial membrane ATP synthase complex (F(1)F(0) ATP synthase or Complex V) that produces ATP from ADP in the presence of a proton gradient across the membrane which is generated by electron transport complexes of the respiratory chain. ATP synthase complex consist of a soluble F(1) head domain - the catalytic core - and a membrane F(1) domain - the membrane proton channel. These two domains are linked by a central stalk rotating inside the F(1) region and a stationary peripheral stalk. During catalysis, ATP synthesis in the catalytic domain of F(1) is coupled via a rotary mechanism of the central stalk subunits to proton translocation. With the subunit c (ATP5MC1), forms the proton-conducting channel in the F(0) domain, that contains two crucial half-channels (inlet and outlet) that facilitate proton movement from the mitochondrial intermembrane space (IMS) into the matrix. Protons are taken up via the inlet half-channel and released through the outlet half-channel, following a Grotthuss mechanism. This Didelphis virginiana (North American opossum) protein is ATP synthase F(0) complex subunit a.